Here is a 170-residue protein sequence, read N- to C-terminus: Putative 4-hydroxy-4-methyl-2-oxoglutarate aldolase (170 aa).

Substrate-binding positions include Gly81–Ile84 and Arg103. Asp104 contributes to the a divalent metal cation binding site.

Belongs to the class II aldolase/RraA-like family. In terms of assembly, homotrimer. A divalent metal cation is required as a cofactor.

It carries out the reaction 4-hydroxy-4-methyl-2-oxoglutarate = 2 pyruvate. It catalyses the reaction oxaloacetate + H(+) = pyruvate + CO2. Functionally, catalyzes the aldol cleavage of 4-hydroxy-4-methyl-2-oxoglutarate (HMG) into 2 molecules of pyruvate. Also contains a secondary oxaloacetate (OAA) decarboxylase activity due to the common pyruvate enolate transition state formed following C-C bond cleavage in the retro-aldol and decarboxylation reactions. This is Putative 4-hydroxy-4-methyl-2-oxoglutarate aldolase from Corynebacterium efficiens (strain DSM 44549 / YS-314 / AJ 12310 / JCM 11189 / NBRC 100395).